A 757-amino-acid chain; its full sequence is 5-methyltetrahydropteroyltriglutamate--homocysteine methyltransferase (757 aa).

5-methyltetrahydropteroyltri-L-glutamate-binding positions include 16–19 (RELK) and lysine 112. Residues 433 to 435 (IGS) and glutamate 486 each bind L-homocysteine. L-methionine contacts are provided by residues 433-435 (IGS) and glutamate 486. 5-methyltetrahydropteroyltri-L-glutamate-binding positions include 517 to 518 (RC) and tryptophan 563. Aspartate 601 contributes to the L-homocysteine binding site. Aspartate 601 provides a ligand contact to L-methionine. Position 607 (glutamate 607) interacts with 5-methyltetrahydropteroyltri-L-glutamate. Residues histidine 643, cysteine 645, and glutamate 667 each contribute to the Zn(2+) site. Histidine 696 functions as the Proton donor in the catalytic mechanism. Cysteine 728 contributes to the Zn(2+) binding site.

This sequence belongs to the vitamin-B12 independent methionine synthase family. Zn(2+) serves as cofactor.

It carries out the reaction 5-methyltetrahydropteroyltri-L-glutamate + L-homocysteine = tetrahydropteroyltri-L-glutamate + L-methionine. It participates in amino-acid biosynthesis; L-methionine biosynthesis via de novo pathway; L-methionine from L-homocysteine (MetE route): step 1/1. Catalyzes the transfer of a methyl group from 5-methyltetrahydrofolate to homocysteine resulting in methionine formation. This chain is 5-methyltetrahydropteroyltriglutamate--homocysteine methyltransferase, found in Histophilus somni (strain 2336) (Haemophilus somnus).